Here is a 412-residue protein sequence, read N- to C-terminus: Divalent metal cation transporter MntH (412 aa).

11 helical membrane-spanning segments follow: residues 19–39 (LALM…GNFA), 46–66 (ASFG…AMLI), 94–114 (VWFY…AEFI), 122–142 (LILG…TFLI), 156–176 (VIGG…IFSQ), 196–216 (AVFL…IYLH), 241–261 (IAMT…AAAF), 290–310 (VFGL…TLAG), 329–349 (TITM…TRIL), 350–370 (VMSQ…LLIF), and 389–409 (IGWM…VGTA).

Belongs to the NRAMP family.

It is found in the cell inner membrane. Functionally, h(+)-stimulated, divalent metal cation uptake system. The polypeptide is Divalent metal cation transporter MntH (Citrobacter koseri (strain ATCC BAA-895 / CDC 4225-83 / SGSC4696)).